A 605-amino-acid chain; its full sequence is MPSSLKGLGQAWLSSSSMALSACCSVSAWQKRLPVLAWLPRYSLQWLKMDFIAGLSVGLTVIPQALAYAEVAGLPPQYGLYSAFTGCFVYVFLGTSRDVTLGPTAIMSLLVSFYTFHEPAYAVLLTFLSGCIQLAMGLLHLGFLLDFISCPVIKGFTSAAAIIIGFGQIKNLLGLHNIPRQFFLQVYHTFLSVGETRLGDAILGLVCMVLLLVLKLMRDRIPPVHPEMPLCVRLSCGLVWTTATARNALVVSFAALVAYSFEVTGYQPFILTGEIAKGLPPVRVPPFSVTMANGTVSFTRMVQDLGAGLAVVPLIGLLESIAVAKAFASQNDYHVDANQELLAIGLTNMLGSFVSSYPITGSFGRTAVNAQSGVCTPAGGLVTGALVLLSLDYLTSLFYYIPKAALAAVIIMAVVPLFDTKIFGMLWRVKRLDLLPLCATFLLCFWEVQYGILAGTLVSTLFLLHFVARPKTQVSEGPVLILQLASGLHFPAIETLRDIVLSRALEVTSPRPAVLECSHVCSIDYTVVLGLAGLLEDFRKQGVSLVFSGLQAPVLHTLLAADLKGFQNFPTLEKAEQYVRQELGMEPYNVCEDSVPEHKVTLLTA.

Topologically, residues 1–50 are extracellular; sequence MPSSLKGLGQAWLSSSSMALSACCSVSAWQKRLPVLAWLPRYSLQWLKMD. Residues 51–71 traverse the membrane as a helical segment; it reads FIAGLSVGLTVIPQALAYAEV. Ala72 is a topological domain (cytoplasmic). The chain crosses the membrane as a helical span at residues 73 to 93; sequence GLPPQYGLYSAFTGCFVYVFL. Residues 94–98 are Extracellular-facing; that stretch reads GTSRD. The chain crosses the membrane as a helical span at residues 99 to 119; that stretch reads VTLGPTAIMSLLVSFYTFHEP. Topologically, residues 120-122 are cytoplasmic; it reads AYA. The chain crosses the membrane as a helical span at residues 123 to 143; sequence VLLTFLSGCIQLAMGLLHLGF. The Extracellular segment spans residues 144–146; sequence LLD. A helical membrane pass occupies residues 147 to 167; that stretch reads FISCPVIKGFTSAAAIIIGFG. The Cytoplasmic segment spans residues 168-196; the sequence is QIKNLLGLHNIPRQFFLQVYHTFLSVGET. A helical transmembrane segment spans residues 197 to 217; the sequence is RLGDAILGLVCMVLLLVLKLM. Residues 218 to 249 lie on the Extracellular side of the membrane; that stretch reads RDRIPPVHPEMPLCVRLSCGLVWTTATARNAL. Residues 250-270 form a helical membrane-spanning segment; sequence VVSFAALVAYSFEVTGYQPFI. Topologically, residues 271-303 are cytoplasmic; the sequence is LTGEIAKGLPPVRVPPFSVTMANGTVSFTRMVQ. A helical transmembrane segment spans residues 304-324; sequence DLGAGLAVVPLIGLLESIAVA. Topologically, residues 325 to 340 are extracellular; that stretch reads KAFASQNDYHVDANQE. The chain crosses the membrane as a helical span at residues 341–361; sequence LLAIGLTNMLGSFVSSYPITG. Over 362–373 the chain is Cytoplasmic; it reads SFGRTAVNAQSG. A helical membrane pass occupies residues 374 to 394; it reads VCTPAGGLVTGALVLLSLDYL. At 395 to 397 the chain is on the extracellular side; that stretch reads TSL. Residues 398–418 form a helical membrane-spanning segment; sequence FYYIPKAALAAVIIMAVVPLF. The Cytoplasmic segment spans residues 419 to 447; it reads DTKIFGMLWRVKRLDLLPLCATFLLCFWE. Residues 448 to 468 form a helical membrane-spanning segment; the sequence is VQYGILAGTLVSTLFLLHFVA. Over 469-605 the chain is Extracellular; the sequence is RPKTQVSEGP…PEHKVTLLTA (137 aa). An STAS domain is found at 479-582; sequence VLILQLASGL…EKAEQYVRQE (104 aa).

This sequence belongs to the SLC26A/SulP transporter (TC 2.A.53) family.

It is found in the cell membrane. It localises to the lysosome membrane. Its subcellular location is the apical cell membrane. The protein localises to the basolateral cell membrane. The enzyme catalyses hydrogencarbonate(in) + chloride(out) = hydrogencarbonate(out) + chloride(in). It catalyses the reaction sulfate(in) + H(+)(in) = sulfate(out) + H(+)(out). It carries out the reaction oxalate(in) + chloride(out) = oxalate(out) + chloride(in). Functionally, sodium-independent anion exchanger mediating bicarbonate, chloride, sulfate and oxalate transport. Exhibits sodium-independent sulfate anion transporter activity that may cooperate with SLC26A2 to mediate DIDS-sensitive sulfate uptake into high endothelial venules endothelial cells (HEVEC). In the kidney, mediates chloride-bicarbonate exchange, facilitating V-ATPase-mediated acid secretion. May function as a chloride channel, playing an important role in moderating chloride homeostasis and neuronal activity in the cerebellum. The sequence is that of Sodium-independent sulfate anion transporter (Slc26a11) from Cavia porcellus (Guinea pig).